Reading from the N-terminus, the 472-residue chain is tRNA-2-methylthio-N(6)-dimethylallyladenosine synthase (472 aa).

Residues 1-24 (MTGTPDVFPPATPGGTPLVALPAG) are disordered. The 118-residue stretch at 33-150 (GKLYIKTHGC…LPELIRARRE (118 aa)) folds into the MTTase N-terminal domain. [4Fe-4S] cluster is bound by residues cysteine 42, cysteine 79, cysteine 113, cysteine 187, cysteine 191, and cysteine 194. The region spanning 173–407 (RADGASAFVS…RINAHAAGIS (235 aa)) is the Radical SAM core domain. The TRAM domain occupies 408-471 (EKMVGTVQTV…TNSLRARVVA (64 aa)).

This sequence belongs to the methylthiotransferase family. MiaB subfamily. In terms of assembly, monomer. It depends on [4Fe-4S] cluster as a cofactor.

The protein resides in the cytoplasm. It carries out the reaction N(6)-dimethylallyladenosine(37) in tRNA + (sulfur carrier)-SH + AH2 + 2 S-adenosyl-L-methionine = 2-methylsulfanyl-N(6)-dimethylallyladenosine(37) in tRNA + (sulfur carrier)-H + 5'-deoxyadenosine + L-methionine + A + S-adenosyl-L-homocysteine + 2 H(+). Its function is as follows. Catalyzes the methylthiolation of N6-(dimethylallyl)adenosine (i(6)A), leading to the formation of 2-methylthio-N6-(dimethylallyl)adenosine (ms(2)i(6)A) at position 37 in tRNAs that read codons beginning with uridine. This chain is tRNA-2-methylthio-N(6)-dimethylallyladenosine synthase, found in Stenotrophomonas maltophilia (strain R551-3).